The sequence spans 75 residues: UPF0235 protein Mvan_2846 (75 aa).

It belongs to the UPF0235 family.

The chain is UPF0235 protein Mvan_2846 from Mycolicibacterium vanbaalenii (strain DSM 7251 / JCM 13017 / BCRC 16820 / KCTC 9966 / NRRL B-24157 / PYR-1) (Mycobacterium vanbaalenii).